We begin with the raw amino-acid sequence, 545 residues long: CTP synthase (545 aa).

Positions 1–266 (MTTRYIFVTG…DDLVIKRFNL (266 aa)) are amidoligase domain. Ser-14 contacts CTP. UTP is bound at residue Ser-14. ATP-binding positions include 15 to 20 (SLGKGI) and Asp-72. The Mg(2+) site is built by Asp-72 and Glu-140. CTP contacts are provided by residues 147–149 (DIE), 187–192 (KTKPTQ), and Lys-223. Residues 187–192 (KTKPTQ) and Lys-223 contribute to the UTP site. ATP is bound at residue 239–241 (KDV). One can recognise a Glutamine amidotransferase type-1 domain in the interval 291-542 (TIGMVGKYIE…IAASYAYQKR (252 aa)). Gly-352 contributes to the L-glutamine binding site. Cys-379 (nucleophile; for glutamine hydrolysis) is an active-site residue. L-glutamine is bound by residues 380–383 (LGMQ), Glu-403, and Arg-470. Catalysis depends on residues His-515 and Glu-517.

This sequence belongs to the CTP synthase family. Homotetramer.

The catalysed reaction is UTP + L-glutamine + ATP + H2O = CTP + L-glutamate + ADP + phosphate + 2 H(+). It carries out the reaction L-glutamine + H2O = L-glutamate + NH4(+). It catalyses the reaction UTP + NH4(+) + ATP = CTP + ADP + phosphate + 2 H(+). It participates in pyrimidine metabolism; CTP biosynthesis via de novo pathway; CTP from UDP: step 2/2. With respect to regulation, allosterically activated by GTP, when glutamine is the substrate; GTP has no effect on the reaction when ammonia is the substrate. The allosteric effector GTP functions by stabilizing the protein conformation that binds the tetrahedral intermediate(s) formed during glutamine hydrolysis. Inhibited by the product CTP, via allosteric rather than competitive inhibition. Catalyzes the ATP-dependent amination of UTP to CTP with either L-glutamine or ammonia as the source of nitrogen. Regulates intracellular CTP levels through interactions with the four ribonucleotide triphosphates. This Shewanella frigidimarina (strain NCIMB 400) protein is CTP synthase.